Here is a 795-residue protein sequence, read N- to C-terminus: Serine/threonine-protein kinase MARK1 (795 aa).

The tract at residues 1–41 is disordered; that stretch reads MSARTPLPTVNERDTENHTSVDGYTETHIPPAKSSSRQNLP. Phosphothreonine is present on T5. One can recognise a Protein kinase domain in the interval 60–311; it reads YRLQKTIGKG…LEQIMKDRWM (252 aa). Residues 66–74 and K89 contribute to the ATP site; that span reads IGKGNFAKV. The Proton acceptor role is filled by D182. A Phosphothreonine modification is found at T208. T215 is modified (phosphothreonine; by LKB1 and TAOK1). S219 is modified (phosphoserine; by GSK3-beta). The UBA domain occupies 329-370; the sequence is DLSDAKRIDIMVTMGFARDEINDALVSQKYDEVMATYILLGR. Disordered stretches follow at residues 377-498 and 518-699; these read GGES…SGGS and QNGR…KPRS. S382, S390, S393, S403, S423, and S444 each carry phosphoserine. The span at 387 to 403 shows a compositional bias: polar residues; it reads CQRSRPSSDLNNSTLQS. A compositionally biased stretch (basic and acidic residues) spans 447 to 459; that stretch reads SEQKEEWGKDTAR. Residues 462 to 473 show a composition bias toward polar residues; the sequence is GSTTVGSKSEVT. S475 bears the Phosphoserine mark. Residues 486-495 are compositionally biased toward polar residues; it reads TASPSNNVYS. Low complexity-rich tracts occupy residues 523–547 and 585–599; these read SSLT…GPSA and PAAS…ASTP. S588 is subject to Phosphoserine. T613 is modified (phosphothreonine; by PKC/PRKCZ). A compositionally biased stretch (polar residues) spans 647–657; sequence GTSTGIISKIT. Composition is skewed to basic and acidic residues over residues 661 to 676 and 683 to 697; these read VRRD…RADT and DPKE…EAKP. Residue S666 is modified to Phosphoserine. The KA1 domain occupies 746-795; it reads DARQDSLVQWEMEVCKLPRLSLNGVRFKRISGTSIAFKNIASKIANELKL.

It belongs to the protein kinase superfamily. CAMK Ser/Thr protein kinase family. SNF1 subfamily. In terms of assembly, interacts with MAPT/TAU. It depends on Mg(2+) as a cofactor. Phosphorylated at Thr-215 by STK11/LKB1 in complex with STE20-related adapter-alpha (STRADA) pseudo kinase and CAB39. Phosphorylation at Thr-215 by TAOK1 activates the kinase activity, leading to phosphorylation and detachment of MAPT/TAU from microtubules. Phosphorylation at Ser-219 by GSK3-beta (GSK3B) inhibits the kinase activity. Phosphorylation at Thr-613 by PRKCZ/aPKC in polarized epithelial cells inhibits the kinase activity.

It is found in the cell membrane. It localises to the cytoplasm. The protein resides in the cytoskeleton. The protein localises to the cell projection. Its subcellular location is the dendrite. The enzyme catalyses L-seryl-[protein] + ATP = O-phospho-L-seryl-[protein] + ADP + H(+). The catalysed reaction is L-threonyl-[protein] + ATP = O-phospho-L-threonyl-[protein] + ADP + H(+). It carries out the reaction L-seryl-[tau protein] + ATP = O-phospho-L-seryl-[tau protein] + ADP + H(+). It catalyses the reaction L-threonyl-[tau protein] + ATP = O-phospho-L-threonyl-[tau protein] + ADP + H(+). Its activity is regulated as follows. Inhibited by phosphorylation at Ser-219. Activated by phosphorylation on Thr-215. Its function is as follows. Serine/threonine-protein kinase. Involved in cell polarity and microtubule dynamics regulation. Phosphorylates DCX, MAP2 and MAP4. Phosphorylates the microtubule-associated protein MAPT/TAU. Involved in cell polarity by phosphorylating the microtubule-associated proteins MAP2, MAP4 and MAPT/TAU at KXGS motifs, causing detachment from microtubules, and their disassembly. Involved in the regulation of neuronal migration through its dual activities in regulating cellular polarity and microtubule dynamics, possibly by phosphorylating and regulating DCX. Also acts as a positive regulator of the Wnt signaling pathway, probably by mediating phosphorylation of dishevelled proteins (DVL1, DVL2 and/or DVL3). The protein is Serine/threonine-protein kinase MARK1 of Mus musculus (Mouse).